A 414-amino-acid polypeptide reads, in one-letter code: 3-phosphoshikimate 1-carboxyvinyltransferase (414 aa).

Residues Lys-20, Ser-21, and Arg-25 each contribute to the 3-phosphoshikimate site. Lys-20 provides a ligand contact to phosphoenolpyruvate. Residue Arg-113 coordinates phosphoenolpyruvate. 6 residues coordinate 3-phosphoshikimate: Ser-154, Ser-155, Gln-156, Ser-181, Asp-296, and Lys-323. A phosphoenolpyruvate-binding site is contributed by Gln-156. Asp-296 serves as the catalytic Proton acceptor. Phosphoenolpyruvate is bound by residues Arg-327, Arg-371, and Lys-395.

It belongs to the EPSP synthase family. Monomer.

It is found in the cytoplasm. It catalyses the reaction 3-phosphoshikimate + phosphoenolpyruvate = 5-O-(1-carboxyvinyl)-3-phosphoshikimate + phosphate. The protein operates within metabolic intermediate biosynthesis; chorismate biosynthesis. Catalyzes the transfer of the enolpyruvyl moiety of phosphoenolpyruvate (PEP) to the 5-hydroxyl of shikimate-3-phosphate (S3P) to produce enolpyruvyl shikimate-3-phosphate and inorganic phosphate. The chain is 3-phosphoshikimate 1-carboxyvinyltransferase from Saccharolobus solfataricus (strain ATCC 35092 / DSM 1617 / JCM 11322 / P2) (Sulfolobus solfataricus).